Reading from the N-terminus, the 249-residue chain is Phosphate import ATP-binding protein PstB 3 (249 aa).

One can recognise an ABC transporter domain in the interval 4–244 (LVINNLDLYY…PQDERTENYI (241 aa)). Position 36–43 (36–43 (GPSGCGKS)) interacts with ATP.

This sequence belongs to the ABC transporter superfamily. Phosphate importer (TC 3.A.1.7) family. In terms of assembly, the complex is composed of two ATP-binding proteins (PstB), two transmembrane proteins (PstC and PstA) and a solute-binding protein (PstS).

The protein resides in the cell membrane. The catalysed reaction is phosphate(out) + ATP + H2O = ADP + 2 phosphate(in) + H(+). Part of the ABC transporter complex PstSACB involved in phosphate import. Responsible for energy coupling to the transport system. This is Phosphate import ATP-binding protein PstB 3 from Streptococcus agalactiae serotype Ia (strain ATCC 27591 / A909 / CDC SS700).